The following is a 446-amino-acid chain: Exodeoxyribonuclease 7 large subunit (446 aa).

The protein belongs to the XseA family. Heterooligomer composed of large and small subunits.

The protein resides in the cytoplasm. The catalysed reaction is Exonucleolytic cleavage in either 5'- to 3'- or 3'- to 5'-direction to yield nucleoside 5'-phosphates.. Bidirectionally degrades single-stranded DNA into large acid-insoluble oligonucleotides, which are then degraded further into small acid-soluble oligonucleotides. The polypeptide is Exodeoxyribonuclease 7 large subunit (Xanthomonas campestris pv. campestris (strain 8004)).